The sequence spans 520 residues: Gamma aminobutyrate transaminase 3, chloroplastic (520 aa).

The transit peptide at 1-44 (MAKITSLIGSGIVAATNQVGPHVKHIPAVGNLQKQIVSDQIQVR) directs the protein to the chloroplast. Pyridoxal 5'-phosphate is bound at residue 172-173 (GS). Tyr-205 is a binding site for substrate. Asp-312 contributes to the pyridoxal 5'-phosphate binding site. Residue Lys-341 coordinates substrate. Lys-341 carries the post-translational modification N6-(pyridoxal phosphate)lysine.

It belongs to the class-III pyridoxal-phosphate-dependent aminotransferase family. As to expression, expressed in leaves, roots, stems, flowers and fruits.

The protein localises to the plastid. Its subcellular location is the chloroplast. It catalyses the reaction 4-aminobutanoate + pyruvate = succinate semialdehyde + L-alanine. The catalysed reaction is 4-aminobutanoate + glyoxylate = succinate semialdehyde + glycine. Transaminase that degrades gamma-amino butyric acid (GABA) and uses pyruvate or glyoxylate as amino-group acceptor. Cannot use beta-alanine, ornithine, acetylornithine, serine, glycine, asparagine, glutamine, glutamate, valine, leucine, isoleucine, methionine, phenylalanine, histidine, lysine, arginine, aspartate, threonine, tyrosine, tryptophan, proline, or cysteine as amino donors. The protein is Gamma aminobutyrate transaminase 3, chloroplastic (GABA-TP3) of Solanum lycopersicum (Tomato).